Consider the following 485-residue polypeptide: Ribosomal protein S6 kinase beta-2 (485 aa).

The tract at residues 1 to 26 (MAAVFDLDLETEEGSEGEGEPEFSPA) is disordered. Over residues 7 to 21 (LDLETEEGSEGEGEP) the composition is skewed to acidic residues. Ser15 carries the post-translational modification Phosphoserine. One can recognise a Protein kinase domain in the interval 67 to 328 (FELLSVLGKG…AADVQRHPFF (262 aa)). Residues 73–81 (LGKGGYGKV) and Lys99 each bind ATP. The active-site Proton acceptor is Asp194. In terms of domain architecture, AGC-kinase C-terminal spans 329–399 (RHINWDDLLA…VAPSVLDSIK (71 aa)). Positions 407–485 (KLRSPRRLNS…SKKGRGRSGR (79 aa)) are disordered. Phosphoserine is present on Ser417. Residue Thr420 is modified to Phosphothreonine. Residue Ser423 is modified to Phosphoserine. Pro residues predominate over residues 436-469 (SPGPPEPMEPSLPPLLPSPPSPPPTSTAPLPIRP). Positions 474–480 (KKSKKGR) match the Nuclear localization signal motif. Residues 474–485 (KKSKKGRGRSGR) are compositionally biased toward basic residues. At Ser476 the chain carries Phosphoserine; by PKC.

This sequence belongs to the protein kinase superfamily. AGC Ser/Thr protein kinase family. S6 kinase subfamily. Post-translationally, phosphorylated and activated by MTOR. Phosphorylation by PKC within the NLS in response to mitogenic stimuli causes cytoplasmic retention.

The protein localises to the cytoplasm. Its subcellular location is the nucleus. It carries out the reaction L-seryl-[protein] + ATP = O-phospho-L-seryl-[protein] + ADP + H(+). The enzyme catalyses L-threonyl-[protein] + ATP = O-phospho-L-threonyl-[protein] + ADP + H(+). Its function is as follows. Phosphorylates specifically ribosomal protein S6. Seems to act downstream of mTOR signaling in response to growth factors and nutrients to promote cell proliferation, cell growth and cell cycle progression in an alternative pathway regulated by MEAK7. The chain is Ribosomal protein S6 kinase beta-2 (Rps6kb2) from Mus musculus (Mouse).